The chain runs to 311 residues: Delta(1)-pyrroline-2-carboxylate/Delta(1)-piperideine-2-carboxylate reductase (311 aa).

Belongs to the ornithine cyclodeaminase/mu-crystallin family. In terms of assembly, homodimer.

The catalysed reaction is L-pipecolate + NAD(+) = Delta(1)-piperideine-2-carboxylate + NADH + H(+). The enzyme catalyses L-pipecolate + NADP(+) = Delta(1)-piperideine-2-carboxylate + NADPH + H(+). It carries out the reaction L-proline + NAD(+) = 1-pyrroline-2-carboxylate + NADH + H(+). It catalyses the reaction L-proline + NADP(+) = 1-pyrroline-2-carboxylate + NADPH + H(+). The protein operates within amino-acid degradation. Functionally, catalyzes the reduction of both Delta(1)-pyrroline-2-carboxylate (Pyr2C) and Delta(1)-piperideine-2-carboxylate (Pip2C) to L-proline and L-pipecolate, respectively, using NADPH or NADH as the electron donor. Can also catalyze the reverse oxidation reactions, albeit at a much lower rate. Together with LhpH, is involved in a trans-3-hydroxy-L-proline (t3LHyp) degradation pathway to L-proline, which allows A.brasilense to grow on t3LHyp as a sole carbon source. Also appears to be involved in D-proline and D-lysine metabolism. Does not show ornithine cyclodeaminase (OCD) activity. This Azospirillum brasilense protein is Delta(1)-pyrroline-2-carboxylate/Delta(1)-piperideine-2-carboxylate reductase.